Consider the following 445-residue polypeptide: Phosphoglucosamine mutase (445 aa).

S102 serves as the catalytic Phosphoserine intermediate. The Mg(2+) site is built by S102, D241, D243, and D245. S102 is subject to Phosphoserine.

Belongs to the phosphohexose mutase family. Mg(2+) is required as a cofactor. Post-translationally, activated by phosphorylation.

It carries out the reaction alpha-D-glucosamine 1-phosphate = D-glucosamine 6-phosphate. In terms of biological role, catalyzes the conversion of glucosamine-6-phosphate to glucosamine-1-phosphate. The chain is Phosphoglucosamine mutase from Haemophilus influenzae (strain PittEE).